An 86-amino-acid chain; its full sequence is Neurotoxin 3FTx-8a (86 aa).

The N-terminal stretch at 1–21 (MKTLLLTLVVVTIVCLDLGYT) is a signal peptide. Disulfide bonds link cysteine 24–cysteine 45, cysteine 27–cysteine 32, cysteine 38–cysteine 63, cysteine 67–cysteine 78, and cysteine 79–cysteine 84.

As to expression, expressed by the venom gland.

It localises to the secreted. Functionally, binds with low affinity to muscular (alpha-1-beta-1-delta-epsilon/CHRNA1-CHRNB1-CHRND-CHRNE) and very low affinity to neuronal (alpha-7/CHRNA7) nicotinic acetylcholine receptor (nAChR). The sequence is that of Neurotoxin 3FTx-8a from Bungarus fasciatus (Banded krait).